The following is a 337-amino-acid chain: UPF0252 protein PH1321 (337 aa).

A helical transmembrane segment spans residues 100–120; it reads IIGMLFLVFIILPAITSNLWS.

This sequence belongs to the UPF0252 family.

It is found in the membrane. The polypeptide is UPF0252 protein PH1321 (Pyrococcus horikoshii (strain ATCC 700860 / DSM 12428 / JCM 9974 / NBRC 100139 / OT-3)).